The primary structure comprises 223 residues: Cytidylate kinase (223 aa).

ATP is bound at residue Gly12–Thr20.

It belongs to the cytidylate kinase family. Type 1 subfamily.

The protein resides in the cytoplasm. The enzyme catalyses CMP + ATP = CDP + ADP. It carries out the reaction dCMP + ATP = dCDP + ADP. This Xylella fastidiosa (strain 9a5c) protein is Cytidylate kinase.